We begin with the raw amino-acid sequence, 252 residues long: Transmembrane ascorbate-dependent reductase CYB561 (252 aa).

At Met1 the chain carries N-acetylmethionine. Residues 1–17 (MEGPASPAPAPGALPYY) lie on the Cytoplasmic side of the membrane. Residues 18–38 (VAFSQLLGLTVVAMTGAWLGM) traverse the membrane as a helical segment. The Cytochrome b561 domain occupies 20–221 (FSQLLGLTVV…FATVVLYILT (202 aa)). Over 39 to 52 (YRGGIAWESALQFN) the chain is Vesicular. The helical transmembrane segment at 53-73 (VHPLCMVIGLVFLQGDALLVY) threads the bilayer. Heme b-binding residues include His54, Arg74, and Lys81. Over 74–86 (RVFRNEAKRTTKV) the chain is Cytoplasmic. Lys81 and Lys85 together coordinate L-ascorbate. A helical membrane pass occupies residues 87 to 107 (LHGLLHVFAFVIALVGLVAVF). Residues His88, 117–120 (DLYS), and His122 each bind heme b. The Vesicular segment spans residues 108-125 (EHHRKKGYADLYSLHSWC). The chain crosses the membrane as a helical span at residues 126 to 146 (GILVFALFFAQWLVGFSFFLF). The Cytoplasmic portion of the chain corresponds to 147-159 (PGASFSLRSRYRP). Residue Arg154 participates in L-ascorbate binding. Residues 160 to 180 (QHVFFGAAIFLLSVATALLGL) form a helical membrane-spanning segment. Heme b-binding residues include His161 and Glu182. The Vesicular segment spans residues 181-199 (KEALLFELGTKYSTFEPEG). The chain crosses the membrane as a helical span at residues 200 to 220 (VLANVLGLLLAAFATVVLYIL). At 221–252 (TRADWKRPLQAEEQALSMDFKTLTEGDSPSSQ) the chain is on the cytoplasmic side. Residue Lys226 coordinates heme b. Phosphoserine is present on residues Ser248 and Ser250.

Heme b is required as a cofactor.

It is found in the cytoplasmic vesicle. It localises to the secretory vesicle. The protein localises to the chromaffin granule membrane. The enzyme catalyses monodehydro-L-ascorbate radical(out) + L-ascorbate(in) = monodehydro-L-ascorbate radical(in) + L-ascorbate(out). Its function is as follows. Transmembrane reductase that uses ascorbate as an electron donor in the cytoplasm and transfers electrons across membranes to reduce monodehydro-L-ascorbate radical in the lumen of secretory vesicles. It is therefore involved the regeneration and homeostasis within secretory vesicles of ascorbate which in turn provides reducing equivalents needed to support the activity of intravesicular enzymes. The protein is Transmembrane ascorbate-dependent reductase CYB561 (CYB561) of Ovis aries (Sheep).